Consider the following 968-residue polypeptide: RNA polymerase-associated protein RapA (968 aa).

Positions 164-334 (DVGRRHAPRV…FARLRLLDPN (171 aa)) constitute a Helicase ATP-binding domain. 177-184 (DEVGLGKT) serves as a coordination point for ATP. Residues 280–283 (DEAH) carry the DEAH box motif. The 173-residue stretch at 490-662 (RVEWLMGYLT…YLASPDQTEG (173 aa)) folds into the Helicase C-terminal domain.

This sequence belongs to the SNF2/RAD54 helicase family. RapA subfamily. In terms of assembly, interacts with the RNAP. Has a higher affinity for the core RNAP than for the holoenzyme. Its ATPase activity is stimulated by binding to RNAP.

Functionally, transcription regulator that activates transcription by stimulating RNA polymerase (RNAP) recycling in case of stress conditions such as supercoiled DNA or high salt concentrations. Probably acts by releasing the RNAP, when it is trapped or immobilized on tightly supercoiled DNA. Does not activate transcription on linear DNA. Probably not involved in DNA repair. The polypeptide is RNA polymerase-associated protein RapA (Escherichia coli O9:H4 (strain HS)).